A 311-amino-acid polypeptide reads, in one-letter code: Probable manganese-dependent inorganic pyrophosphatase (311 aa).

The Mn(2+) site is built by histidine 9, aspartate 13, aspartate 15, aspartate 77, histidine 99, and aspartate 151.

It belongs to the PPase class C family. Requires Mn(2+) as cofactor.

It localises to the cytoplasm. It catalyses the reaction diphosphate + H2O = 2 phosphate + H(+). The chain is Probable manganese-dependent inorganic pyrophosphatase from Streptococcus equi subsp. zooepidemicus (strain H70).